A 273-amino-acid polypeptide reads, in one-letter code: Cyclic di-AMP synthase CdaA (273 aa).

3 helical membrane passes run 12–32 (LGNA…IMVI), 40–60 (LLKG…LGLS), and 61–81 (TLQW…IIIF). A DAC domain is found at 82–242 (QPELRRALEQ…NGDLHRELTE (161 aa)).

The protein belongs to the adenylate cyclase family. DacA/CdaA subfamily. Probably a homodimer. Interacts with CdaR. May interact with GlmM.

It is found in the cell membrane. The enzyme catalyses 2 ATP = 3',3'-c-di-AMP + 2 diphosphate. Its activity is regulated as follows. DAC activity is stimulated about 20-fold in E.coli by coexpression with CdaR. Its function is as follows. One of 3 paralogous diadenylate cyclases (DAC) in this bacteria, catalyzing the condensation of 2 ATP molecules into cyclic di-AMP (c-di-AMP). Upon expression in E.coli leads to c-di-AMP synthesis. Probably the main producer of c-di-AMP for the cell; is probably implicated in control of peptidoglycan synthesis. In B.subtilis c-di-AMP is a second messenger that mediates growth, DNA repair and cell wall homeostasis; it is toxic when present in excess. In Bacillus subtilis (strain 168), this protein is Cyclic di-AMP synthase CdaA.